The chain runs to 267 residues: Sulfate transporter CysZ (267 aa).

The next 4 membrane-spanning stretches (helical) occupy residues 29–49 (FVIM…WLFI), 73–93 (ILLI…FTTL), 149–169 (IILF…PIIV), and 212–232 (GLVM…PVAV).

It belongs to the CysZ family.

The protein localises to the cell inner membrane. High affinity, high specificity proton-dependent sulfate transporter, which mediates sulfate uptake. Provides the sulfur source for the cysteine synthesis pathway. The protein is Sulfate transporter CysZ of Pasteurella multocida (strain Pm70).